Here is a 219-residue protein sequence, read N- to C-terminus: Ribosomal RNA small subunit methyltransferase G (219 aa).

Residues G85, L90, 136–137 (VE), and R151 each bind S-adenosyl-L-methionine.

It belongs to the methyltransferase superfamily. RNA methyltransferase RsmG family.

The protein resides in the cytoplasm. The enzyme catalyses guanosine(527) in 16S rRNA + S-adenosyl-L-methionine = N(7)-methylguanosine(527) in 16S rRNA + S-adenosyl-L-homocysteine. Its function is as follows. Specifically methylates the N7 position of guanine in position 527 of 16S rRNA. The chain is Ribosomal RNA small subunit methyltransferase G from Cellvibrio japonicus (strain Ueda107) (Pseudomonas fluorescens subsp. cellulosa).